A 107-amino-acid polypeptide reads, in one-letter code: Nucleoid-associated protein GDI3467/Gdia_2910 (107 aa).

It belongs to the YbaB/EbfC family. In terms of assembly, homodimer.

The protein localises to the cytoplasm. It localises to the nucleoid. Its function is as follows. Binds to DNA and alters its conformation. May be involved in regulation of gene expression, nucleoid organization and DNA protection. This Gluconacetobacter diazotrophicus (strain ATCC 49037 / DSM 5601 / CCUG 37298 / CIP 103539 / LMG 7603 / PAl5) protein is Nucleoid-associated protein GDI3467/Gdia_2910.